We begin with the raw amino-acid sequence, 455 residues long: MAENKYLTVTDLNYYITQKFKNDPYLHKVFLQGELSNFRYRRNSHQYFSLKDEKSKINVVMFRSYFDKVKFKPEEGMKVYVTGYVSVYGPQGSYQFYAENMEPAGLGALYEQLKQLQVKLAKEGLFNPEHKKKIPRFPDRIAVVTSASGAVIHDIMVTANRRFPHAEIDLFPAQVQGDTAAESLVRAMRQIAAEGDKYDVMIIGRGGGSLEDLWPFNEEEVVRQVYNMQMPVISSVGHETDTTLCDLVADARAATPTAAAEYATPNLMDELAGIHQLQSRLFSSMQTIIRQKRDRLNRIQNSIIMREPTRLYDQQIETVDRLKQRLQNSMQNKLDHSKQDYRLLNQRLFAVNPDKQINQMKQQRLFLAKRLSDNMQHYLKDKRNIFAQIVQQLDDYSPLKTLERGFVYTTDRDGKTISSVKQVNKNDSLNLHFKDGQVAAKVVEVKEEKNANEEK.

The protein belongs to the XseA family. Heterooligomer composed of large and small subunits.

It localises to the cytoplasm. It catalyses the reaction Exonucleolytic cleavage in either 5'- to 3'- or 3'- to 5'-direction to yield nucleoside 5'-phosphates.. In terms of biological role, bidirectionally degrades single-stranded DNA into large acid-insoluble oligonucleotides, which are then degraded further into small acid-soluble oligonucleotides. The protein is Exodeoxyribonuclease 7 large subunit of Lactobacillus acidophilus (strain ATCC 700396 / NCK56 / N2 / NCFM).